Here is a 453-residue protein sequence, read N- to C-terminus: Midnolin (453 aa).

The Ubiquitin-like domain occupies 20–94 (MNLNIQSTTG…LTLLPSVEAG (75 aa)). 4 disordered regions span residues 185 to 219 (HLAS…TTSV), 231 to 256 (PCAE…RSRK), 330 to 374 (SQAR…QTEN), and 390 to 434 (QKRL…IDFE). Low complexity-rich tracts occupy residues 188-204 (SCTP…PTAS) and 239-252 (SSRG…SASS). Polar residues predominate over residues 330-362 (SQARNPKATSPQSSEPQQTTHPVGHCQAQTRTC). Residues 365-374 (SGDRLRQTEN) show a composition bias toward basic and acidic residues. Basic residues predominate over residues 390–399 (QKRLRRKARR). Positions 415–428 (RTSSNSSTSSGEGS) are enriched in low complexity.

The protein resides in the nucleus. Its subcellular location is the cytoplasm. The protein localises to the cytosol. It is found in the nucleolus. Functionally, facilitates ubiquitin-independent proteasomal degradation of polycomb protein CBX4. Plays a role in inhibiting the activity of glucokinase GCK and both glucose-induced and basal insulin secretion. The sequence is that of Midnolin (midn) from Xenopus tropicalis (Western clawed frog).